Consider the following 577-residue polypeptide: Arginine--tRNA ligase (577 aa).

A 'HIGH' region motif is present at residues proline 122–histidine 132.

It belongs to the class-I aminoacyl-tRNA synthetase family. In terms of assembly, monomer.

It is found in the cytoplasm. The enzyme catalyses tRNA(Arg) + L-arginine + ATP = L-arginyl-tRNA(Arg) + AMP + diphosphate. In Salmonella dublin (strain CT_02021853), this protein is Arginine--tRNA ligase.